The following is a 281-amino-acid chain: NADPH-dependent 7-cyano-7-deazaguanine reductase (281 aa).

A substrate-binding site is contributed by 87 to 89; that stretch reads IES. 89–90 is a binding site for NADPH; that stretch reads SK. Catalysis depends on Cys-188, which acts as the Thioimide intermediate. Asp-195 serves as the catalytic Proton donor. 227–228 serves as a coordination point for substrate; that stretch reads HE. 256–257 contacts NADPH; the sequence is RG. The interval 261-281 is disordered; sequence INPYRSTEQDKPAHNNRMARQ.

The protein belongs to the GTP cyclohydrolase I family. QueF type 2 subfamily. As to quaternary structure, homodimer.

It is found in the cytoplasm. It catalyses the reaction 7-aminomethyl-7-carbaguanine + 2 NADP(+) = 7-cyano-7-deazaguanine + 2 NADPH + 3 H(+). Its pathway is tRNA modification; tRNA-queuosine biosynthesis. In terms of biological role, catalyzes the NADPH-dependent reduction of 7-cyano-7-deazaguanine (preQ0) to 7-aminomethyl-7-deazaguanine (preQ1). In Vibrio campbellii (strain ATCC BAA-1116), this protein is NADPH-dependent 7-cyano-7-deazaguanine reductase.